The primary structure comprises 100 residues: Small ribosomal subunit protein uS14c (100 aa).

The protein belongs to the universal ribosomal protein uS14 family. Part of the 30S ribosomal subunit.

The protein localises to the plastid. It localises to the chloroplast. Binds 16S rRNA, required for the assembly of 30S particles. The polypeptide is Small ribosomal subunit protein uS14c (Oenothera argillicola (Appalachian evening primrose)).